A 630-amino-acid polypeptide reads, in one-letter code: Subtilisin-like protease 1 (630 aa).

The N-terminal stretch at 1-25 (MVLTRRAALLLCPWVIQLVIKRTLA) is a signal peptide. The propeptide at 26–202 (GDILPNEGKK…IESDKLVGAD (177 aa)) is inhibition peptide. Positions 72–125 (NAYNPDRDAPKEELQKLQDQQETPSKQPNNLRNSPQKRAEKKESPGKNKKSLRL) are disordered. Residues 76–87 (PDRDAPKEELQK) are compositionally biased toward basic and acidic residues. Over residues 94–107 (TPSKQPNNLRNSPQ) the composition is skewed to polar residues. Residues 108–117 (KRAEKKESPG) show a composition bias toward basic and acidic residues. Residues E129, N130, T133, P135, and G190 each coordinate Ca(2+). The disordered stretch occupies residues 230 to 254 (LEVPSGESPPSHAASSGSPFDDDDD). The span at 233–248 (PSGESPPSHAASSGSP) shows a compositional bias: low complexity. D281 provides a ligand contact to Ca(2+). In terms of domain architecture, Peptidase S8 spans 287–604 (QWGLDLARLD…GGYVDILRAV (318 aa)). Disulfide bonds link C313-C423, C402-C419, and C465-C478. D316 (charge relay system) is an active-site residue. Ca(2+) is bound by residues D325, E336, R340, V343, D344, D345, D346, N348, V350, D352, and D353. H372 acts as the Charge relay system in catalysis. Positions 383, 386, 388, and 390 each coordinate Ca(2+). An N-linked (GlcNAc...) asparagine glycan is attached at N546. S549 (charge relay system) is an active-site residue.

Belongs to the peptidase S8 family. As to quaternary structure, heterodimer between p54 form and prodomain p31; the interaction inhibits p54 catalytic activity. Heterodimer p31-p54 is monomeric at basic pH and dimeric at acidic pH; dimerization is driven by the N-terminal prodomain (p31). The cofactor is Ca(2+). The prodomain (p31) is cleaved, probably by autocatalysis, and remains non-covalently associated with the p54 form as an inhibitor. p54 is further cleaved into the p45/p47 forms. Post-translationally, the relevance of the N-glycosylation is not clear. In an insect expression system, SUB1 glycosylation appears to affect its processing into the active mature form suggesting that SUB1 may not be N-glycosylated in parasites.

It is found in the secreted. The protein resides in the parasitophorous vacuole lumen. It catalyses the reaction Hydrolysis of proteins with broad specificity for peptide bonds, and a preference for a large uncharged residue in P1. Hydrolyzes peptide amides.. Its activity is regulated as follows. Inhibited by peptidic alpha-ketoamide inhibitors. Inhibited by the alpha-ketoamide nonapeptide JMV5126 (isocaproyl-KITAQ(CO)DDEE-NH2). Inhibited by the alpha-ketoamide peptide MAM-117. Serine protease which plays an essential role in merozoite invasion of and egress from host erythrocytes by processing and activating various merozoite surface and parasitophorous vacuole proteins. This Plasmodium vivax protein is Subtilisin-like protease 1.